The chain runs to 247 residues: Adenosylcobinamide-GDP ribazoletransferase (247 aa).

The next 5 helical transmembrane spans lie at 34 to 54 (IITF…VFMV), 59 to 79 (CGAP…TGGF), 113 to 133 (GGLA…ELAL), 138 to 158 (ILAS…LLMY), and 194 to 214 (VLLP…AIFI).

Belongs to the CobS family. Requires Mg(2+) as cofactor.

It localises to the cell inner membrane. It carries out the reaction alpha-ribazole + adenosylcob(III)inamide-GDP = adenosylcob(III)alamin + GMP + H(+). The enzyme catalyses alpha-ribazole 5'-phosphate + adenosylcob(III)inamide-GDP = adenosylcob(III)alamin 5'-phosphate + GMP + H(+). It participates in cofactor biosynthesis; adenosylcobalamin biosynthesis; adenosylcobalamin from cob(II)yrinate a,c-diamide: step 7/7. Its function is as follows. Joins adenosylcobinamide-GDP and alpha-ribazole to generate adenosylcobalamin (Ado-cobalamin). Also synthesizes adenosylcobalamin 5'-phosphate from adenosylcobinamide-GDP and alpha-ribazole 5'-phosphate. The protein is Adenosylcobinamide-GDP ribazoletransferase of Escherichia coli O45:K1 (strain S88 / ExPEC).